Consider the following 329-residue polypeptide: Adenylate isopentenyltransferase 7, mitochondrial (329 aa).

A mitochondrion-targeting transit peptide spans 1 to 40; the sequence is MKFSISSLKQVQPILCFKNKLSKVNVNSFLHPKEKVIFVM. 41-48 is a binding site for ATP; sequence GATGSGKS.

The protein belongs to the IPP transferase family. In terms of tissue distribution, expressed in both the vascular stele and the phloem companion cells of the root, in endodermis of the root elongation zone, trichomes on young leaves, and some pollen tubes.

It localises to the mitochondrion. It carries out the reaction dimethylallyl diphosphate + ADP = N(6)-(dimethylallyl)adenosine 5'-diphosphate + diphosphate. The catalysed reaction is dimethylallyl diphosphate + ATP = N(6)-(dimethylallyl)adenosine 5'-triphosphate + diphosphate. Its function is as follows. Involved in cytokinin biosynthesis. Catalyzes the transfer of an isopentenyl group from dimethylallyl diphosphate (DMAPP) to ATP and ADP. The protein is Adenylate isopentenyltransferase 7, mitochondrial (IPT7) of Arabidopsis thaliana (Mouse-ear cress).